A 362-amino-acid polypeptide reads, in one-letter code: MLYALLLPHVAAFHAFNLIRYITFRAGGACLTALVVSFLLGPRLIRWLKSLQKQGQPIRADGPERHLIEKKGTPTMGGFLILIALTVSTLLWADLRNGYVWAVLMITIGYGALGFADDFLKLTKRNTKGVPGRIKLVVQAVLGLGAAVWITQLMPGSIADSLAVPVFKHLMIPFGPLFPLVAMFVMMGASNAVNLTDGLDGLAIVPTIIAAGVFTLIAYLVGNRIFSHYLEINFVPGTGELAVFCSALIGAGMGFLWFNAPPAAVFMGDTGSLALGGALGSVAVATKNEIVLAITGGLFVVETVSVIVQVFWYKRTGRRVFLMAPLHHHFEKKGWAEPTVVIRFWIVAMILALLGLATLKIR.

Helical transmembrane passes span 21 to 41, 75 to 95, 100 to 120, 136 to 156, 170 to 190, 201 to 221, 225 to 245, 247 to 267, 290 to 310, and 339 to 359; these read YITF…FLLG, TMGG…WADL, VWAV…DDFL, LVVQ…LMPG, LMIP…MGAS, GLAI…AYLV, IFSH…AVFC, ALIG…AVFM, IVLA…IVQV, and TVVI…LATL.

This sequence belongs to the glycosyltransferase 4 family. MraY subfamily. Mg(2+) serves as cofactor.

The protein localises to the cell inner membrane. It carries out the reaction UDP-N-acetyl-alpha-D-muramoyl-L-alanyl-gamma-D-glutamyl-meso-2,6-diaminopimeloyl-D-alanyl-D-alanine + di-trans,octa-cis-undecaprenyl phosphate = di-trans,octa-cis-undecaprenyl diphospho-N-acetyl-alpha-D-muramoyl-L-alanyl-D-glutamyl-meso-2,6-diaminopimeloyl-D-alanyl-D-alanine + UMP. The protein operates within cell wall biogenesis; peptidoglycan biosynthesis. Its function is as follows. Catalyzes the initial step of the lipid cycle reactions in the biosynthesis of the cell wall peptidoglycan: transfers peptidoglycan precursor phospho-MurNAc-pentapeptide from UDP-MurNAc-pentapeptide onto the lipid carrier undecaprenyl phosphate, yielding undecaprenyl-pyrophosphoryl-MurNAc-pentapeptide, known as lipid I. The chain is Phospho-N-acetylmuramoyl-pentapeptide-transferase from Acidiphilium cryptum (strain JF-5).